A 164-amino-acid chain; its full sequence is Ribosome maturation factor RimP (164 aa).

This sequence belongs to the RimP family.

It localises to the cytoplasm. Functionally, required for maturation of 30S ribosomal subunits. The polypeptide is Ribosome maturation factor RimP (Mesoplasma florum (strain ATCC 33453 / NBRC 100688 / NCTC 11704 / L1) (Acholeplasma florum)).